Reading from the N-terminus, the 490-residue chain is Subtilisin-like protease 8 (490 aa).

Residues 1–26 (MKGLLSLSVLPVLAYASPMIVDSIHQ) form the signal peptide. Residues 27-134 (NAAPILSSTN…YIERDSEVHT (108 aa)) constitute a propeptide that is removed on maturation. In terms of domain architecture, Inhibitor I9 spans 43–134 (SYIVVFKKGV…YIERDSEVHT (92 aa)). The 307-residue stretch at 144 to 450 (PWGLARISHR…GGSDDYKKII (307 aa)) folds into the Peptidase S8 domain. Active-site charge relay system residues include aspartate 180 and histidine 212. An N-linked (GlcNAc...) asparagine glycan is attached at asparagine 282. Catalysis depends on serine 378, which acts as the Charge relay system. Asparagine 456 carries N-linked (GlcNAc...) asparagine glycosylation.

Belongs to the peptidase S8 family.

It is found in the secreted. Secreted subtilisin-like serine protease with keratinolytic activity that contributes to pathogenicity. This Trichophyton verrucosum (strain HKI 0517) protein is Subtilisin-like protease 8 (SUB8).